Reading from the N-terminus, the 646-residue chain is RNA-binding protein RMD9, mitochondrial (646 aa).

The N-terminal 14 residues, 1 to 14 (MMLRRNAVRSLKTM), are a transit peptide targeting the mitochondrion. A propeptide spans 15-51 (EISVSNVVNSGSIAMLRGKLANVVLSDRTYHSSPIFH) (removed in mature form). The stretch at 209 to 238 (VSGYGATHLLTSFKELSFDDDCIRIWEASK) is one PPR1 repeat. One copy of the PPR2 repeat lies at 251-282 (EPKVVGFMLPLLYAKTRSLTEPNELYNQIIQS). A PPR3 repeat occupies 288–317 (PNLYSGLIKVFIKAEDYEKALSLFGQLCEK). Residues 323–353 (YGYLIETHLSFIGDSKNLTLAESFFDKIIND) form a PPR4 repeat. The PPR5 repeat unit spans residues 363 to 394 (VSTVNSFLQNIWKAQNDFDHVYRIWEKAVKFY). The PPR6 repeat unit spans residues 401–439 (GILSSLNNTFFTIFFENYINDNINGFRKLQEIITFYSGV). A PPR7 repeat occupies 444–473 (EPFFNVMLTRASIWHERSIIDFIDKNYTLY). The PPR8 repeat unit spans residues 481–514 (SYRILLKSLGSIDNTNNEEILDRWLELVKKLNEL).

It belongs to the RMD9 family. In terms of assembly, monomer. In terms of processing, phosphorylated. Phosphorylation promotes binding to RNA.

Its subcellular location is the mitochondrion inner membrane. Binds the RNA motif 5'-AAUAA[U/C]AUUCUU-3' in the 3'-UTR of mitochondrial mRNAs. Involved in the processing or stability of mitochondrial mRNAs. The protein is RNA-binding protein RMD9, mitochondrial of Saccharomyces cerevisiae (strain ATCC 204508 / S288c) (Baker's yeast).